The primary structure comprises 770 residues: MADSGLVDHSPHHPTKAAQLSTASNVILIDNYDSFTWNVYQYLVLEGATVNVFRNDQITLEELIAKKPTQLVISPGPGHPETDAGISSAAIQYFSGKIPIFGVCMGQQCIITCFGGKVDVTGEILHGKTSPLKHDGKGAYEGLPGSLAVTRYHSLAGTHATIPDCLEVSSSVQLADDSNKDVIMGVRHKKLAVEGVQFHPESILTEYGRIMFRNFLKLTAGTWEGNGKHFGEQSSTTKATVPSNPPPKTDKKLSILERIYDHRRAAVAVQKTIPSQRPADLQAAYDLNLAPPQIPFPARLRQSPYPLSLMAEIKRASPSKGMIAENACAPAQARQYAKAGASVISVLTEPEWFKGSIDDLRAVRQSLEGMTNRPAILRKEFVFDEYQILEARLAGADTVLLIVKMLSVELLTRLYHYSRSLGMEPLVEVNTPEEMKIAVDLGAEVIGVNNRDLTSFEVDLGTTSRLMDQVPSSTIVCALSGISGPKDVEAYKKEGVKAILVGEALMRAADTATFIAELLGGSSQTVSSESRRSPLVKICGTRSEEAARAAIEAGADLIGIIMVQGRTGCVPDDVALPISQVVRSTPKPASQALHTSQEPPAATSVEYFDHSAKILRHPSRALLVGVFQNQPLDYILSQQQKLGLDVVQLHGSEPLEWAKLIPVPVIRKFGLDEPAIARRAYHSLPLLDSGVGGTGELLDQSRVQNVLDKDCGLRVILAGGLDPTNVAGIVQKLGESGRKVVGVDVSSGVESDGAQDLNKIRAFVQAVRGL.

The 201-residue stretch at 25–225 folds into the Glutamine amidotransferase type-1 domain; the sequence is NVILIDNYDS…LKLTAGTWEG (201 aa). 76–78 contributes to the L-glutamine binding site; sequence GPG. Cysteine 104 functions as the Nucleophile; for GATase activity in the catalytic mechanism. Residues glutamine 108 and 154–155 each bind L-glutamine; that span reads SL. Residues histidine 199 and glutamate 201 each act as for GATase activity in the active site. The interval 228–251 is disordered; sequence KHFGEQSSTTKATVPSNPPPKTDK. Residues 232-242 show a composition bias toward polar residues; the sequence is EQSSTTKATVP. The interval 255–519 is indole-3-glycerol phosphate synthase; that stretch reads ILERIYDHRR…DTATFIAELL (265 aa). Residues 535-770 are N-(5'-phosphoribosyl)anthranilate isomerase; sequence LVKICGTRSE…RAFVQAVRGL (236 aa).

The enzyme catalyses N-(5-phospho-beta-D-ribosyl)anthranilate = 1-(2-carboxyphenylamino)-1-deoxy-D-ribulose 5-phosphate. It catalyses the reaction 1-(2-carboxyphenylamino)-1-deoxy-D-ribulose 5-phosphate + H(+) = (1S,2R)-1-C-(indol-3-yl)glycerol 3-phosphate + CO2 + H2O. The catalysed reaction is chorismate + L-glutamine = anthranilate + pyruvate + L-glutamate + H(+). The protein operates within amino-acid biosynthesis; L-tryptophan biosynthesis; L-tryptophan from chorismate: step 1/5. It functions in the pathway amino-acid biosynthesis; L-tryptophan biosynthesis; L-tryptophan from chorismate: step 3/5. It participates in amino-acid biosynthesis; L-tryptophan biosynthesis; L-tryptophan from chorismate: step 4/5. Functionally, trifunctional enzyme bearing the Gln amidotransferase (GATase) domain of anthranilate synthase, indole-glycerolphosphate synthase, and phosphoribosylanthranilate isomerase activities. The sequence is that of Multifunctional tryptophan biosynthesis protein (trpC) from Aspergillus niger.